The chain runs to 113 residues: Protein USP2 (113 aa).

An N-terminal signal peptide occupies residues 1-18 (MKITMFFAALSAASGVFA). Repeat copies occupy residues 32–37 (IGAGVG), 40–45 (IGAGVG), 46–49 (SYGY), 50–53 (PYGA), 59–65 (LQLLPLR), and 69–75 (LRRLPLR). A 2 X 6 AA repeats region spans residues 32–45 (IGAGVGIGIGAGVG). The tract at residues 46-53 (SYGYPYGA) is 2 X 4 AA approximate tandem repeats. Residues 59–75 (LQLLPLRWLPLRRLPLR) form a 2 X 7 AA approximate repeats region.

Its subcellular location is the secreted. The polypeptide is Protein USP2 (USP2) (Puccinia graminis (Black stem rust fungus)).